The chain runs to 127 residues: Small ribosomal subunit protein uS12 (127 aa).

Position 89 is a 3-methylthioaspartic acid (Asp89). The disordered stretch occupies residues 101–127; it reads ALDTSGVAGRTQRRSKYGAKRPKEAKK. Residues 111-127 are compositionally biased toward basic residues; that stretch reads TQRRSKYGAKRPKEAKK.

Belongs to the universal ribosomal protein uS12 family. As to quaternary structure, part of the 30S ribosomal subunit. Contacts proteins S8 and S17. May interact with IF1 in the 30S initiation complex.

In terms of biological role, with S4 and S5 plays an important role in translational accuracy. Functionally, interacts with and stabilizes bases of the 16S rRNA that are involved in tRNA selection in the A site and with the mRNA backbone. Located at the interface of the 30S and 50S subunits, it traverses the body of the 30S subunit contacting proteins on the other side and probably holding the rRNA structure together. The combined cluster of proteins S8, S12 and S17 appears to hold together the shoulder and platform of the 30S subunit. The sequence is that of Small ribosomal subunit protein uS12 from Flavobacterium johnsoniae (strain ATCC 17061 / DSM 2064 / JCM 8514 / BCRC 14874 / CCUG 350202 / NBRC 14942 / NCIMB 11054 / UW101) (Cytophaga johnsonae).